Consider the following 187-residue polypeptide: dTTP/UTP pyrophosphatase (187 aa).

Asp-65 acts as the Proton acceptor in catalysis.

It belongs to the Maf family. YhdE subfamily. Requires a divalent metal cation as cofactor.

It is found in the cytoplasm. The catalysed reaction is dTTP + H2O = dTMP + diphosphate + H(+). The enzyme catalyses UTP + H2O = UMP + diphosphate + H(+). Nucleoside triphosphate pyrophosphatase that hydrolyzes dTTP and UTP. May have a dual role in cell division arrest and in preventing the incorporation of modified nucleotides into cellular nucleic acids. This chain is dTTP/UTP pyrophosphatase, found in Deinococcus geothermalis (strain DSM 11300 / CIP 105573 / AG-3a).